The following is a 521-amino-acid chain: GMP synthase [glutamine-hydrolyzing] (521 aa).

The 196-residue stretch at 8-203 (KILILDFGAQ…VVDICGCQTL (196 aa)) folds into the Glutamine amidotransferase type-1 domain. Catalysis depends on cysteine 85, which acts as the Nucleophile. Residues histidine 177 and glutamate 179 contribute to the active site. The region spanning 204-396 (WTAANIIDDQ…LGLPRTMVYR (193 aa)) is the GMPS ATP-PPase domain. 231-237 (SGGVDSS) is a binding site for ATP.

Homodimer.

It carries out the reaction XMP + L-glutamine + ATP + H2O = GMP + L-glutamate + AMP + diphosphate + 2 H(+). The protein operates within purine metabolism; GMP biosynthesis; GMP from XMP (L-Gln route): step 1/1. Catalyzes the synthesis of GMP from XMP. The protein is GMP synthase [glutamine-hydrolyzing] of Xanthomonas oryzae pv. oryzae (strain MAFF 311018).